A 1015-amino-acid chain; its full sequence is MLKKPSGREADMPVDFLTTEQVESYGRFTGEPDELQLARYFHLDEADKEFIGKSRGDHNRLGIALQIGCVRFLGTFLTDMNHIPSGVRHFTARQLGIRDITVLAEYGQRENTRREHAALIRQHYQYREFAWPWTFRLTRLLYTRSWISNERPGLLFDLATGWLMQHRIILPGATTLTRLISEVREKATLRLWNKLALIPSAEQRSQLEMLLGPTDCSRLSLLESLKKGPVTISGPAFNEAIERWKTLNDFGLHAENLSTLPAVRLKNLARYAGMTSVFNIARMSPQKRMAVLVAFVLAWETLALDDALEVLDAMLAVIIRDARKIGQKKRLRSLKDLDKSALALASACSYLLKEETPDESIRAEVFSYIPRQKLAEIITLVREIARPSDDNFHDEMVEQYGRVRRFLPHLLNTVKFSSAPAGVTTLNACDYLSREFSSRRQFFDDAPTEIISQSWKRLVINKEKHITRRGYTLCFLSKLQDSLRRRDVYVTGSNRWGDPRARLLQGADWQANRIKVYRSLGHPTDPQEAIKSLGHQLDSRYRQVAARLGENEAVELDVSGPKPRLTISPLASLDEPDSLKRLSKMISDLLPPVDLTELLLEINAHTGFADEFFHASEASARVDDLPVSISAVLMAEACNIGLEPLIRSNVPALTRHRLNWTKANYLRAETITSANARLVDFQATLPLAQIWGGGEVASADGMRFVTPVRTINAGPNRKYFGNNRGITWYNFVSDQYSGFHGFHGIVIPGTLRDSIFVLEGLLEQETGLNPTEIMTDTAGASDLVFGLFWLLGYQFSPRLADAGASVFWRMDHDADYGVLNDIARGQSDPRKIVLQWDEMIRTAGSLKLGKVQASVLVRSLLKSERPSGLTQAIIEVGRINKTLYLLNYIDDEDYRRRILTQLNRGESRHAVARAICHGQKGEIRKRYTDGQEDQLGALGLVTNAVVLWNTIYMQAALDHLRAQGETLNDEDIARLSPLCHGHINMLGHYSFTLAELVTKGHLRPLKEASEAENVA.

The protein belongs to the transposase 7 family.

Functionally, required for transposition of transposon Tn3. This chain is Transposase for transposon Tn3 (tnpA), found in Escherichia coli.